The chain runs to 222 residues: MCPPRGLLLVAILVLLNHLDHLSLARNLPTATPGPGMFQCLNHSQNLLRTVSNTLQKARQTLEFYSCTSEEIDHEDITKDKSSTVAACLPLELAPNESCLASREISFITNGSCLTPGKASSMMTLCLSSIYEDLKMYQVEFKAMNAKLLIDPQRQIFLDENMLTAIDKLMQALNFNSETVPQKPSLEGLDFYKTKVKLCILLHAFRIRAVTINRMMGYLNAS.

The N-terminal stretch at methionine 1–alanine 25 is a signal peptide. Cystine bridges form between cysteine 40/cysteine 113, cysteine 67/cysteine 199, and cysteine 88/cysteine 126. Residues asparagine 42, asparagine 96, and asparagine 110 are each glycosylated (N-linked (GlcNAc...) asparagine).

The protein belongs to the IL-6 superfamily. Heterodimer with IL12B; disulfide-linked. This heterodimer is known as interleukin IL-12. Heterodimer with EBI3/IL27B; not disulfide-linked. This heterodimer is known as interleukin IL-35. Interacts with NBR1; this interaction promotes IL-12 secretion.

Its subcellular location is the secreted. Heterodimerizes with IL12B to form the IL-12 cytokine or with EBI3/IL27B to form the IL-35 cytokine. IL-12 is primarily produced by professional antigen-presenting cells (APCs) such as B-cells and dendritic cells (DCs) as well as macrophages and granulocytes and regulates T-cell and natural killer-cell responses, induces the production of interferon-gamma (IFN-gamma), favors the differentiation of T-helper 1 (Th1) cells and is an important link between innate resistance and adaptive immunity. Mechanistically, exerts its biological effects through a receptor composed of IL12R1 and IL12R2 subunits. Binding to the receptor results in the rapid tyrosine phosphorylation of a number of cellular substrates including the JAK family kinases TYK2 and JAK2. In turn, recruited STAT4 gets phosphorylated and translocates to the nucleus where it regulates cytokine/growth factor responsive genes. As part of IL-35, plays essential roles in maintaining the immune homeostasis of the liver microenvironment and also functions as an immune-suppressive cytokine. Mediates biological events through unconventional receptors composed of IL12RB2 and gp130/IL6ST heterodimers or homodimers. Signaling requires the transcription factors STAT1 and STAT4, which form a unique heterodimer that binds to distinct DNA sites. In Equus caballus (Horse), this protein is Interleukin-12 subunit alpha (IL12A).